Consider the following 635-residue polypeptide: 1-deoxy-D-xylulose-5-phosphate synthase (635 aa).

Thiamine diphosphate contacts are provided by residues His74 and 115-117 (AHS). Mg(2+) is bound at residue Asp146. Residues 147 to 148 (GA), Asn176, Tyr283, and Glu365 each bind thiamine diphosphate. Position 176 (Asn176) interacts with Mg(2+).

Belongs to the transketolase family. DXPS subfamily. Homodimer. Mg(2+) is required as a cofactor. Thiamine diphosphate serves as cofactor.

It carries out the reaction D-glyceraldehyde 3-phosphate + pyruvate + H(+) = 1-deoxy-D-xylulose 5-phosphate + CO2. It participates in metabolic intermediate biosynthesis; 1-deoxy-D-xylulose 5-phosphate biosynthesis; 1-deoxy-D-xylulose 5-phosphate from D-glyceraldehyde 3-phosphate and pyruvate: step 1/1. Functionally, catalyzes the acyloin condensation reaction between C atoms 2 and 3 of pyruvate and glyceraldehyde 3-phosphate to yield 1-deoxy-D-xylulose-5-phosphate (DXP). This Polaromonas sp. (strain JS666 / ATCC BAA-500) protein is 1-deoxy-D-xylulose-5-phosphate synthase.